Here is a 413-residue protein sequence, read N- to C-terminus: Serine hydroxymethyltransferase (413 aa).

(6S)-5,6,7,8-tetrahydrofolate-binding positions include Leu117 and 121 to 123 (GHL). An N6-(pyridoxal phosphate)lysine modification is found at Lys226. (6S)-5,6,7,8-tetrahydrofolate contacts are provided by residues Glu239 and 349–351 (SPF).

The protein belongs to the SHMT family. Homodimer. Pyridoxal 5'-phosphate serves as cofactor.

The protein localises to the cytoplasm. The enzyme catalyses (6R)-5,10-methylene-5,6,7,8-tetrahydrofolate + glycine + H2O = (6S)-5,6,7,8-tetrahydrofolate + L-serine. It functions in the pathway one-carbon metabolism; tetrahydrofolate interconversion. It participates in amino-acid biosynthesis; glycine biosynthesis; glycine from L-serine: step 1/1. Its function is as follows. Catalyzes the reversible interconversion of serine and glycine with tetrahydrofolate (THF) serving as the one-carbon carrier. This reaction serves as the major source of one-carbon groups required for the biosynthesis of purines, thymidylate, methionine, and other important biomolecules. Also exhibits THF-independent aldolase activity toward beta-hydroxyamino acids, producing glycine and aldehydes, via a retro-aldol mechanism. This is Serine hydroxymethyltransferase from Bacillus cereus (strain AH187).